The sequence spans 330 residues: Aspartate--ammonia ligase (330 aa).

It belongs to the class-II aminoacyl-tRNA synthetase family. AsnA subfamily.

Its subcellular location is the cytoplasm. The enzyme catalyses L-aspartate + NH4(+) + ATP = L-asparagine + AMP + diphosphate + H(+). Its pathway is amino-acid biosynthesis; L-asparagine biosynthesis; L-asparagine from L-aspartate (ammonia route): step 1/1. The polypeptide is Aspartate--ammonia ligase (Cronobacter sakazakii (strain ATCC BAA-894) (Enterobacter sakazakii)).